The following is a 198-amino-acid chain: MDSLQKQDLRRPKIHGAVQASPYQPPTLASLQRLLWVRQAATLNHIDEVWPSLFLGDAYAARDKSKLIQLGITHVVNAAAGKFQVDTGAKFYRGMSLEYYGIEADDNPFFDLSVYFLPVARYIRAALSVPQGRVLVHCAMGVSRSATLVLAFLMICENMTLVEAIQTVQAHRNICPNSGFLRQLQVLDNRLGRETGRF.

Residues 45–193 (HIDEVWPSLF…LQVLDNRLGR (149 aa)) form the Tyrosine-protein phosphatase domain. Catalysis depends on Cys138, which acts as the Phosphocysteine intermediate.

The protein belongs to the protein-tyrosine phosphatase family. Non-receptor class dual specificity subfamily. Highly expressed in the testis (at protein level). Also found in the skeletal muscle.

It catalyses the reaction O-phospho-L-tyrosyl-[protein] + H2O = L-tyrosyl-[protein] + phosphate. The enzyme catalyses O-phospho-L-seryl-[protein] + H2O = L-seryl-[protein] + phosphate. It carries out the reaction O-phospho-L-threonyl-[protein] + H2O = L-threonyl-[protein] + phosphate. Its function is as follows. Dual specificity phosphatase that dephosphorylates MAPK8/JNK and MAPK14/p38, but not MAPK1/ERK2, in vitro. Exhibits intrinsic phosphatase activity towards both phospho-seryl/threonyl and -tyrosyl residues, with similar specific activities in vitro. In Homo sapiens (Human), this protein is Dual specificity protein phosphatase 13B.